The primary structure comprises 644 residues: Exoribonuclease 2 (644 aa).

The 328-residue stretch at 189 to 516 (REDLTALDFV…NHRLLKAVIK (328 aa)) folds into the RNB domain. Positions 561-643 (DTRFAAEIVD…ETRSIIARPV (83 aa)) constitute an S1 motif domain.

The protein belongs to the RNR ribonuclease family. RNase II subfamily.

It is found in the cytoplasm. The enzyme catalyses Exonucleolytic cleavage in the 3'- to 5'-direction to yield nucleoside 5'-phosphates.. Its function is as follows. Involved in mRNA degradation. Hydrolyzes single-stranded polyribonucleotides processively in the 3' to 5' direction. The protein is Exoribonuclease 2 of Escherichia coli O139:H28 (strain E24377A / ETEC).